We begin with the raw amino-acid sequence, 254 residues long: Triosephosphate isomerase (254 aa).

Asparagine 12–lysine 14 contributes to the substrate binding site. The Electrophile role is filled by histidine 99. Glutamate 169 acts as the Proton acceptor in catalysis. Substrate contacts are provided by residues glycine 175, serine 214, and glycine 235–glycine 236.

Belongs to the triosephosphate isomerase family. As to quaternary structure, homodimer.

The protein localises to the cytoplasm. The catalysed reaction is D-glyceraldehyde 3-phosphate = dihydroxyacetone phosphate. The protein operates within carbohydrate biosynthesis; gluconeogenesis. It participates in carbohydrate degradation; glycolysis; D-glyceraldehyde 3-phosphate from glycerone phosphate: step 1/1. In terms of biological role, involved in the gluconeogenesis. Catalyzes stereospecifically the conversion of dihydroxyacetone phosphate (DHAP) to D-glyceraldehyde-3-phosphate (G3P). The sequence is that of Triosephosphate isomerase from Brucella melitensis biotype 1 (strain ATCC 23456 / CCUG 17765 / NCTC 10094 / 16M).